A 307-amino-acid chain; its full sequence is MKTFLVFALLAVAATSAIAQMETRCIPGLERPWQQQPLPPQQTFPQQPLFSQQQQQQLFPQQPSFSQQQPPFWQQQPPFSQQQPILPQQPPFSQQQQLVLPQQPPFSQQQQPVLPPQQSPFPQQQQQHQQLVQQQIPVVQPSILQQLNPCKVFLQQQCSPVAMPQRLARSQMLQQSSCHVMQQQCCQQLPQIPQQSRYEAIRAIIYSIILQEQQQVQGSIQSQQQQPQQLGQCVSQPQQQSQQQLGQQPQQQQLAQGTFLQPHQIAQLEVMTSIALRILPTMCSVNVPLYRTTTSVPFGVGTGVGAY.

The signal sequence occupies residues 1–23; the sequence is MKTFLVFALLAVAATSAIAQMET. 2 disordered regions span residues 31 to 88 and 105 to 126; these read RPWQ…ILPQ and PFSQ…QQQQ. A compositionally biased stretch (low complexity) spans 43–88; that stretch reads TFPQQPLFSQQQQQQLFPQQPSFSQQQPPFWQQQPPFSQQQPILPQ.

It belongs to the gliadin/glutenin family. As to quaternary structure, disulfide-bridge linked aggregates. Expressed in endosperm, but not in husk and leaf tissues.

In terms of biological role, glutenins are high-molecular weight seed storage proteins of wheat endosperm. Thought to be responsible for the visco-elastic property of wheat dough. The polypeptide is Glutenin, low molecular weight subunit 1D1 (Triticum aestivum (Wheat)).